The chain runs to 426 residues: Glutamate-1-semialdehyde 2,1-aminomutase (426 aa).

Lys-265 carries the post-translational modification N6-(pyridoxal phosphate)lysine.

This sequence belongs to the class-III pyridoxal-phosphate-dependent aminotransferase family. HemL subfamily. Pyridoxal 5'-phosphate serves as cofactor.

The protein localises to the cytoplasm. It catalyses the reaction (S)-4-amino-5-oxopentanoate = 5-aminolevulinate. It participates in porphyrin-containing compound metabolism; protoporphyrin-IX biosynthesis; 5-aminolevulinate from L-glutamyl-tRNA(Glu): step 2/2. The sequence is that of Glutamate-1-semialdehyde 2,1-aminomutase from Hyperthermus butylicus (strain DSM 5456 / JCM 9403 / PLM1-5).